A 244-amino-acid chain; its full sequence is Carboxy-S-adenosyl-L-methionine synthase (244 aa).

Residues tyrosine 40, 65-67 (GCS), 90-91 (DN), asparagine 134, and arginine 201 contribute to the S-adenosyl-L-methionine site.

Belongs to the class I-like SAM-binding methyltransferase superfamily. Cx-SAM synthase family. Homodimer.

The enzyme catalyses prephenate + S-adenosyl-L-methionine = carboxy-S-adenosyl-L-methionine + 3-phenylpyruvate + H2O. Functionally, catalyzes the conversion of S-adenosyl-L-methionine (SAM) to carboxy-S-adenosyl-L-methionine (Cx-SAM). The protein is Carboxy-S-adenosyl-L-methionine synthase of Citrifermentans bemidjiense (strain ATCC BAA-1014 / DSM 16622 / JCM 12645 / Bem) (Geobacter bemidjiensis).